We begin with the raw amino-acid sequence, 487 residues long: Bifunctional cytokinin biosynthesis protein (487 aa).

The interval 1 to 266 (MESTNRFMIG…RMASDFCYAS (266 aa)) is adenylate isopentenyltransferase. Positions 267–487 (TSISFHPINE…FSRKGELEWV (221 aa)) are cytokinin riboside 5'-monophosphate phosphoribohydrolase. Residues E352, 380–381 (RK), 403–409 (GYGTLEE), and T415 contribute to the substrate site.

It in the N-terminal section; belongs to the IPP transferase family. In the C-terminal section; belongs to the LOG family.

The catalysed reaction is dimethylallyl diphosphate + AMP = N(6)-(dimethylallyl)adenosine 5'-phosphate + diphosphate. It carries out the reaction N(6)-(dimethylallyl)adenosine 5'-phosphate + H2O = N(6)-dimethylallyladenine + D-ribose 5-phosphate. It catalyses the reaction 9-ribosyl-trans-zeatin 5'-phosphate + H2O = trans-zeatin + D-ribose 5-phosphate. Its pathway is secondary metabolite biosynthesis. Its function is as follows. Bifunctional cytokinin synthesis protein; part of the gene cluster that mediates the biosynthesis of cytokinins such as fusatin, fusatinic acids or 8-oxofusatin, known for their growth promoting and anti-senescence activities toward host plants. FCK1 is a bifunctional enzyme that performs the first steps in the biosynthesis of Fusarium cytokinins. It first condenses adenosine monophosphate (AMP) with dimethylallyl diphosphate (DMAPP) to yield isoprenyl adenosine monophosphate. It then catalyzes the removal of the phosphoribose to produce isopentenylaldehyde. The cytochrome P450 monooxygenase then converts isopentenylaldehyde to trans-zeatin. A condensation step converts trans-zeatin to fusatin which is further modified to produce fusatinic acid. The mechanism for oxidation of fusatin to fusatinic acid remains unknown. 8-oxofusatin could be produced through several pathways, via direct oxygenation of fusatin, or via the 8-oxo-pentenyladenine intermediate which itself must arise from either the prenylation of 8-oxo-AMP by FCK1 and/or oxygenation of isopentenylaldehyde. Both the FCK3 and FCK4 enzymes act downstream of the identified cytokinins to produce yet unidentified compounds. This Fusarium pseudograminearum (strain CS3096) (Wheat and barley crown-rot fungus) protein is Bifunctional cytokinin biosynthesis protein.